The sequence spans 289 residues: Inorganic pyrophosphatase (289 aa).

S2 is subject to N-acetylserine. Residue K57 is modified to N6-acetyllysine. The Mg(2+) site is built by D116, D121, and D153. K228 bears the N6-acetyllysine mark. A Phosphoserine modification is found at S250.

The protein belongs to the PPase family. As to quaternary structure, homodimer. The cofactor is Mg(2+).

The protein resides in the cytoplasm. The catalysed reaction is diphosphate + H2O = 2 phosphate + H(+). The chain is Inorganic pyrophosphatase (PPA1) from Pongo abelii (Sumatran orangutan).